The following is a 334-amino-acid chain: Delta(1)-pyrroline-2-carboxylate/Delta(1)-piperideine-2-carboxylate reductase (334 aa).

The Charge relay system role is filled by Ser-44. His-45 acts as the Proton donor in catalysis. Substrate is bound at residue Arg-49. 117–121 (HFSAL) provides a ligand contact to NADP(+). A substrate-binding site is contributed by Thr-157. 175 to 177 (DFA) is a binding site for NADP(+). 183–184 (RG) is a substrate binding site. The Charge relay system role is filled by Glu-185. Residues 226 to 227 (HK) and 301 to 307 (RLPSQRR) each bind NADP(+).

Belongs to the LDH2/MDH2 oxidoreductase family. Homodimer.

The catalysed reaction is L-pipecolate + NADP(+) = Delta(1)-piperideine-2-carboxylate + NADPH + H(+). It carries out the reaction L-proline + NADP(+) = 1-pyrroline-2-carboxylate + NADPH + H(+). The enzyme catalyses cis-4-hydroxy-L-proline + NADP(+) = Delta(1)-pyrroline-(4S)-hydroxy-2-carboxylate + NADPH + 2 H(+). Functionally, catalyzes the reduction of both Delta(1)-pyrroline-2-carboxylate (Pyr2C) and Delta(1)-piperideine-2-carboxylate (Pip2C) to L-proline and L-pipecolate, respectively, using NADPH as the electron donor. Cannot use NADH instead of NADPH. Is likely involved in a degradation pathway that converts trans-3-hydroxy-L-proline (t3LHyp) to L-proline, which would allow P.aeruginosa to grow on t3LHyp as a sole carbon source. Can also catalyze the reverse oxidation reactions, albeit at a much lower rate. Is also able to use Delta(1)-pyrroline-(4S)-hydroxy-2-carboxylate (Pyr4SH2C) and cis-4-hydroxy-L-proline (c4LHyp) as substrates, and might be involved in the metabolism of c4LHyp, a compound which is generated by the hydroxylation of free L-proline in bacteria. The protein is Delta(1)-pyrroline-2-carboxylate/Delta(1)-piperideine-2-carboxylate reductase of Pseudomonas aeruginosa (strain ATCC 15692 / DSM 22644 / CIP 104116 / JCM 14847 / LMG 12228 / 1C / PRS 101 / PAO1).